Reading from the N-terminus, the 374-residue chain is Agmatine deiminase (374 aa).

2 residues coordinate agmatine: Asp220 and Asp226. The active-site Amidino-cysteine intermediate is Cys366.

Belongs to the agmatine deiminase family. In terms of assembly, forms homodimers.

The enzyme catalyses agmatine + H2O = N-carbamoylputrescine + NH4(+). Its pathway is amine and polyamine biosynthesis; putrescine biosynthesis via agmatine pathway; N-carbamoylputrescine from agmatine: step 1/1. Functionally, mediates the hydrolysis of agmatine into N-carbamoylputrescine in the arginine decarboxylase (ADC) pathway of putrescine biosynthesis, a basic polyamine. The sequence is that of Agmatine deiminase from Medicago truncatula (Barrel medic).